Here is a 476-residue protein sequence, read N- to C-terminus: Aspartyl/glutamyl-tRNA(Asn/Gln) amidotransferase subunit B (476 aa).

The protein belongs to the GatB/GatE family. GatB subfamily. Heterotrimer of A, B and C subunits.

It carries out the reaction L-glutamyl-tRNA(Gln) + L-glutamine + ATP + H2O = L-glutaminyl-tRNA(Gln) + L-glutamate + ADP + phosphate + H(+). The enzyme catalyses L-aspartyl-tRNA(Asn) + L-glutamine + ATP + H2O = L-asparaginyl-tRNA(Asn) + L-glutamate + ADP + phosphate + 2 H(+). Its function is as follows. Allows the formation of correctly charged Asn-tRNA(Asn) or Gln-tRNA(Gln) through the transamidation of misacylated Asp-tRNA(Asn) or Glu-tRNA(Gln) in organisms which lack either or both of asparaginyl-tRNA or glutaminyl-tRNA synthetases. The reaction takes place in the presence of glutamine and ATP through an activated phospho-Asp-tRNA(Asn) or phospho-Glu-tRNA(Gln). The chain is Aspartyl/glutamyl-tRNA(Asn/Gln) amidotransferase subunit B from Albidiferax ferrireducens (strain ATCC BAA-621 / DSM 15236 / T118) (Rhodoferax ferrireducens).